We begin with the raw amino-acid sequence, 53 residues long: uncharacterized protein (53 aa).

This is an uncharacterized protein from Rickettsia conorii (strain ATCC VR-613 / Malish 7).